Consider the following 137-residue polypeptide: Flagellar basal body rod protein FlgB (137 aa).

This sequence belongs to the flagella basal body rod proteins family. As to quaternary structure, the basal body constitutes a major portion of the flagellar organelle and consists of a number of rings mounted on a central rod. In Gram-negative bacteria, at least four rings, L, P, S and M are present, whereas Gram-positive bacteria lack the L and P rings. The rod consists of about 26 subunits of FlgG in the distal portion, and FlgB, FlgC and FlgF build up the proximal portion of the rod with about 6 subunits each. Rod assembly occurs by export via the flagellum-specific pathway of its constituent proteins and by their incorporation into the rod structure in the probable order of FlgB, FlgC, FlgF and FlgG. Another protein, FliE, also assembles onto the stable rod structure.

It localises to the bacterial flagellum basal body. In terms of biological role, structural component of flagellum, the bacterial motility apparatus. Part of the rod structure of flagellar basal body. This chain is Flagellar basal body rod protein FlgB, found in Proteus mirabilis (strain HI4320).